A 95-amino-acid polypeptide reads, in one-letter code: Small ribosomal subunit protein bS6 (95 aa).

Belongs to the bacterial ribosomal protein bS6 family.

Binds together with bS18 to 16S ribosomal RNA. This Corynebacterium urealyticum (strain ATCC 43042 / DSM 7109) protein is Small ribosomal subunit protein bS6.